Here is a 581-residue protein sequence, read N- to C-terminus: Proline--tRNA ligase (581 aa).

The protein belongs to the class-II aminoacyl-tRNA synthetase family. ProS type 1 subfamily. As to quaternary structure, homodimer.

It is found in the cytoplasm. It carries out the reaction tRNA(Pro) + L-proline + ATP = L-prolyl-tRNA(Pro) + AMP + diphosphate. Functionally, catalyzes the attachment of proline to tRNA(Pro) in a two-step reaction: proline is first activated by ATP to form Pro-AMP and then transferred to the acceptor end of tRNA(Pro). As ProRS can inadvertently accommodate and process non-cognate amino acids such as alanine and cysteine, to avoid such errors it has two additional distinct editing activities against alanine. One activity is designated as 'pretransfer' editing and involves the tRNA(Pro)-independent hydrolysis of activated Ala-AMP. The other activity is designated 'posttransfer' editing and involves deacylation of mischarged Ala-tRNA(Pro). The misacylated Cys-tRNA(Pro) is not edited by ProRS. The sequence is that of Proline--tRNA ligase from Acidovorax ebreus (strain TPSY) (Diaphorobacter sp. (strain TPSY)).